The chain runs to 333 residues: MKGIRLCGSGAAVPRLRISNDDLSGRVETSDEWIRTRTGIAARRVADESESLTSLAAAAGKQALERAGWDASSVDLILLATSSPDDLFGSAPKVQALIGAGSAVAFDLTAACSGFLFSLVTAAQYLRTGAMTRALVIGADQLSRWVDWDDRRSCVLFGDGAGAVAIEACPAENDGLLGFRLNSDGARGDCLTLAQTSERAELLPGMSHQRGGYAPIGMNGQEVYKFAVREVPAILKQLLADTNTEPASIDWLLLHQANQRILDAAAERLGIAADKVLSNLANYGNTSAGTIPLMLHEAVSDGRIQSGQLIASSGFGAGLSWGAALLRWDGPTS.

Catalysis depends on residues cysteine 112 and histidine 255. The tract at residues 256 to 260 is ACP-binding; sequence QANQR. Residue asparagine 285 is part of the active site.

The protein belongs to the thiolase-like superfamily. FabH family. As to quaternary structure, homodimer.

The protein resides in the cytoplasm. It catalyses the reaction malonyl-[ACP] + acetyl-CoA + H(+) = 3-oxobutanoyl-[ACP] + CO2 + CoA. It functions in the pathway lipid metabolism; fatty acid biosynthesis. Its function is as follows. Catalyzes the condensation reaction of fatty acid synthesis by the addition to an acyl acceptor of two carbons from malonyl-ACP. Catalyzes the first condensation reaction which initiates fatty acid synthesis and may therefore play a role in governing the total rate of fatty acid production. Possesses both acetoacetyl-ACP synthase and acetyl transacylase activities. Its substrate specificity determines the biosynthesis of branched-chain and/or straight-chain of fatty acids. The sequence is that of Beta-ketoacyl-[acyl-carrier-protein] synthase III from Synechococcus sp. (strain RCC307).